Here is a 76-residue protein sequence, read N- to C-terminus: Sulfur carrier protein TusA (76 aa).

Cys14 serves as the catalytic Cysteine persulfide intermediate.

The protein belongs to the sulfur carrier protein TusA family. As to quaternary structure, interacts with IscS.

Its subcellular location is the cytoplasm. The protein operates within tRNA modification. Its function is as follows. Sulfur carrier protein involved in sulfur trafficking in the cell. Part of a sulfur-relay system required for 2-thiolation during synthesis of 2-thiouridine of the modified wobble base 5-methylaminomethyl-2-thiouridine (mnm(5)s(2)U) in tRNA. Interacts with IscS and stimulates its cysteine desulfurase activity. Accepts an activated sulfur from IscS, which is then transferred to TusD, and thus determines the direction of sulfur flow from IscS to 2-thiouridine formation. Also appears to be involved in sulfur transfer for the biosynthesis of molybdopterin. This is Sulfur carrier protein TusA from Buchnera aphidicola subsp. Acyrthosiphon pisum (strain Tuc7).